Reading from the N-terminus, the 256-residue chain is Geranylgeranylglyceryl phosphate synthase (256 aa).

Mg(2+)-binding residues include Asp-28 and Ser-53. Residues 172 to 178 (YLEAGSG), 203 to 204 (GG), and 225 to 226 (GT) contribute to the sn-glycerol 1-phosphate site.

The protein belongs to the GGGP/HepGP synthase family. Group II subfamily. The cofactor is Mg(2+).

The protein localises to the cytoplasm. It carries out the reaction sn-glycerol 1-phosphate + (2E,6E,10E)-geranylgeranyl diphosphate = sn-3-O-(geranylgeranyl)glycerol 1-phosphate + diphosphate. The protein operates within membrane lipid metabolism; glycerophospholipid metabolism. Functionally, prenyltransferase that catalyzes the transfer of the geranylgeranyl moiety of geranylgeranyl diphosphate (GGPP) to the C3 hydroxyl of sn-glycerol-1-phosphate (G1P). This reaction is the first ether-bond-formation step in the biosynthesis of archaeal membrane lipids. The protein is Geranylgeranylglyceryl phosphate synthase of Methanococcus maripaludis (strain C6 / ATCC BAA-1332).